The primary structure comprises 351 residues: MEVPTESKTTQIDEISHNLSFTTSNAGDSSWDKISFFRHRSRQIKRDTWLVSVFVLLQIVLFAVTMGVNDCSGNSHGHCSAKLLGRFSFQSLSENPMLGPSASTLEHMGGLSWKALTENHEIWRILTSPWLHSGLFHLFINLGSLIFVGIYMEQQFGPLRIAVIYFLSGIMGSLFAVLFVRNIPSISSGAAFFGLIGAMLSALAKNWNLYNSKISALAIIFTIFTVNFLIGFLPFIDNFANIGGFISGFLLGFVLLFKPQLRQMPPSHKGKLFEDDMNRSTRLKEQFDRPVLRIICLLVFCGILAGVLLAACWGVNLNRHCHWCRYVDCVPTKKWSCSDMTTSCEVYSSKP.

Transmembrane regions (helical) follow at residues 48 to 68 (TWLV…TMGV), 130 to 150 (WLHS…FVGI), 160 to 180 (RIAV…VLFV), 183 to 203 (IPSI…LSAL), 216 to 236 (ALAI…LPFI), 239 to 259 (FANI…LFKP), and 294 to 314 (IICL…ACWG).

It belongs to the peptidase S54 family. In terms of tissue distribution, expressed in pollen mother cell.

The protein localises to the golgi apparatus membrane. Its function is as follows. Probable inactive rhomboid-type serine protease. Functionally, probably essential for the meiosis stage-specific callose accumulation and pollen exine formation. This Arabidopsis thaliana (Mouse-ear cress) protein is Inactive RHOMBOID-like protein 8.